We begin with the raw amino-acid sequence, 299 residues long: MKLFLLAAAAFSAPALTVSELNHIKSLNPRWKAGIPKRFEGLTKDEISSLLMPVSFLKRDRAAVPRGTVSATQAPDSFDFREEYPHCIPEVVDQGGCGSCWAFSSVASVGDRRCFAGLDKKAVKYSPQYVVSCDRGDMACDGGWLPSVWRFLTKTGTTTDECVPYQSGSTGARGTCPTKCADGSDLPHLYKATKAVDYGLDAPAIMKALATGGPLQTAFTVYSDFMYYESGVYQHTYGRVEGGHAVDMVGYGTDDDGVDYWIIKNSWGPDWGEDGYFRIIRMTNECGIEEQVIGGFFEN.

A signal peptide spans 1–19 (MKLFLLAAAAFSAPALTVS). Intrachain disulfides connect cysteine 87–cysteine 114, cysteine 97–cysteine 140, and cysteine 133–cysteine 176. Cysteine 100 is a catalytic residue. Catalysis depends on residues histidine 244 and asparagine 265.

It belongs to the peptidase C1 family.

Its subcellular location is the vacuole. In terms of biological role, thiol protease which is required for parasite excystation and invasion of the proximal small intestine of the human host. The polypeptide is Cathepsin B-like CP3 (CP3) (Giardia intestinalis (Giardia lamblia)).